The sequence spans 363 residues: tRNA U34 carboxymethyltransferase (363 aa).

Residues lysine 101, tryptophan 134, lysine 139, glycine 159, 181 to 183 (DPS), 221 to 222 (LE), methionine 237, tyrosine 241, and arginine 356 contribute to the carboxy-S-adenosyl-L-methionine site.

Belongs to the class I-like SAM-binding methyltransferase superfamily. CmoB family. In terms of assembly, homotetramer.

The enzyme catalyses carboxy-S-adenosyl-L-methionine + 5-hydroxyuridine(34) in tRNA = 5-carboxymethoxyuridine(34) in tRNA + S-adenosyl-L-homocysteine + H(+). In terms of biological role, catalyzes carboxymethyl transfer from carboxy-S-adenosyl-L-methionine (Cx-SAM) to 5-hydroxyuridine (ho5U) to form 5-carboxymethoxyuridine (cmo5U) at position 34 in tRNAs. The sequence is that of tRNA U34 carboxymethyltransferase from Psychrobacter cryohalolentis (strain ATCC BAA-1226 / DSM 17306 / VKM B-2378 / K5).